The sequence spans 644 residues: Exoribonuclease 2 (644 aa).

The region spanning 189-516 is the RNB domain; that stretch reads REDLTALDFV…NHRLLKAVIK (328 aa). One can recognise an S1 motif domain in the interval 561–643; it reads DTRFAAEIVD…ETRSIIARPV (83 aa).

It belongs to the RNR ribonuclease family. RNase II subfamily.

It localises to the cytoplasm. It carries out the reaction Exonucleolytic cleavage in the 3'- to 5'-direction to yield nucleoside 5'-phosphates.. Involved in mRNA degradation. Hydrolyzes single-stranded polyribonucleotides processively in the 3' to 5' direction. The chain is Exoribonuclease 2 from Escherichia coli O6:K15:H31 (strain 536 / UPEC).